We begin with the raw amino-acid sequence, 437 residues long: Protein translocase subunit SecY (437 aa).

The next 10 membrane-spanning stretches (helical) occupy residues 23 to 43 (IVFLIVAIIVFRIGSFIPIPG), 77 to 97 (IFALGIMPYISASIIIQLLTL), 125 to 145 (LILALVQSIGIAMTLPNIAGI), 154 to 174 (FYFYLIAIISLVTSTMFLMWL), 183 to 203 (IGNGISIIIFIGIIAGLPSAI), 217 to 237 (ILLFLFILLLIFSVIFLVVFM), 271 to 291 (MAGVIPAIFASSIVLFPATII), 315 to 335 (YLILYISAIVFFCFFYTGLVF), 367 to 387 (IMLRLTLVGSLYITFICLIPE), and 395 to 415 (VPFYFGGTSLLIVVVVIIDFI).

The protein belongs to the SecY/SEC61-alpha family. As to quaternary structure, component of the Sec protein translocase complex. Heterotrimer consisting of SecY, SecE and SecG subunits. The heterotrimers can form oligomers, although 1 heterotrimer is thought to be able to translocate proteins. Interacts with the ribosome. Interacts with SecDF, and other proteins may be involved. Interacts with SecA.

Its subcellular location is the cell membrane. The central subunit of the protein translocation channel SecYEG. Consists of two halves formed by TMs 1-5 and 6-10. These two domains form a lateral gate at the front which open onto the bilayer between TMs 2 and 7, and are clamped together by SecE at the back. The channel is closed by both a pore ring composed of hydrophobic SecY resides and a short helix (helix 2A) on the extracellular side of the membrane which forms a plug. The plug probably moves laterally to allow the channel to open. The ring and the pore may move independently. The polypeptide is Protein translocase subunit SecY (Buchnera aphidicola subsp. Acyrthosiphon pisum (strain APS) (Acyrthosiphon pisum symbiotic bacterium)).